Reading from the N-terminus, the 707-residue chain is E3 ubiquitin-protein ligase Praja-2 (707 aa).

Basic and acidic residues predominate over residues 1–10 (MSQYTEKEPS). Disordered regions lie at residues 1 to 32 (MSQY…QTIT), 72 to 120 (PKEN…PSIA), and 250 to 314 (QNGQ…VRPK). S2 bears the N-acetylserine mark. 2 stretches are compositionally biased toward polar residues: residues 74-83 (ENTSGSSSLD) and 109-119 (LNQSTESSPSI). Residues 257–276 (RSSEDGVVRKRRQDDTDQGR) show a composition bias toward basic and acidic residues. Polar residues predominate over residues 293-308 (EQNTSDRANHHGSSPE). Residues S306 and S320 each carry the phosphoserine modification. S339 is modified (phosphoserine; by PKA). Disordered regions lie at residues 379–405 (RVTQ…QESR) and 424–493 (EDSS…QTSL). Positions 381 to 390 (TQRETERNRV) are enriched in basic and acidic residues. T385 bears the Phosphothreonine; by PKA mark. Residues 391–401 (TSENGATASGR) are compositionally biased toward polar residues. Residue S430 is modified to Phosphoserine. Residues 465–481 (NDPELQSDSSGPEEENQ) are compositionally biased toward acidic residues. The segment covering 482–491 (ELSLQEGEQT) has biased composition (polar residues). Positions 530–707 (DGNNNLEDDS…PANDNAEEAP (178 aa)) are interaction with PRKAR1A, PRKAR2A and PRKAR2B. The interval 549–569 (WSLFDGFADGLGVAEAISYVD) is mediates interaction with TBC1D31. The RING-type; atypical zinc finger occupies 633–674 (CPICCSEYIKDDIATELPCHHFFHKPCVSIWLQKSGTCPVCR). Over residues 685–701 (SAAASSDPDPDASPAND) the composition is skewed to low complexity. Residues 685-707 (SAAASSDPDPDASPANDNAEEAP) are disordered.

In terms of assembly, binds ubiquitin-conjugating enzymes (E2s). In vitro, interacts with the ubiquitin-conjugating enzyme, UBE2D2. The phosphorylated form interacts with PRKAR1A, PRKAR2A and PRKAR2B. Binds the catalytic subunits of cAMP-dependent protein kinase. Interacts with MFHAS1. Interacts with TBC1D31; the interaction is direct and recruits PJA2 to centrosomes.

It is found in the cytoplasm. Its subcellular location is the cell membrane. The protein localises to the endoplasmic reticulum membrane. It localises to the golgi apparatus membrane. The protein resides in the synapse. It is found in the postsynaptic density. Its subcellular location is the cytoskeleton. The protein localises to the microtubule organizing center. It localises to the centrosome. The catalysed reaction is S-ubiquitinyl-[E2 ubiquitin-conjugating enzyme]-L-cysteine + [acceptor protein]-L-lysine = [E2 ubiquitin-conjugating enzyme]-L-cysteine + N(6)-ubiquitinyl-[acceptor protein]-L-lysine.. It participates in protein modification; protein ubiquitination. Functionally, has E2-dependent E3 ubiquitin-protein ligase activity. Responsible for ubiquitination of cAMP-dependent protein kinase type I and type II-alpha/beta regulatory subunits and for targeting them for proteasomal degradation. Essential for PKA-mediated long-term memory processes. Through the ubiquitination of MFHAS1, positively regulates the TLR2 signaling pathway that leads to the activation of the downstream p38 and JNK MAP kinases and promotes the polarization of macrophages toward the pro-inflammatory M1 phenotype. Plays a role in ciliogenesis by ubiquitinating OFD1. This Mus musculus (Mouse) protein is E3 ubiquitin-protein ligase Praja-2 (Pja2).